Here is a 569-residue protein sequence, read N- to C-terminus: Formate hydrogenlyase subunit 5 (569 aa).

Residues 538–569 (MTVVDVRKKKSKVVPYKELERYSIERKNSPLK) constitute a propeptide that is removed on maturation.

The protein belongs to the complex I 49 kDa subunit family. FHL comprises of a formate dehydrogenase, unidentified electron carriers and a hydrogenase (isoenzyme 3). In this non-energy conserving pathway molecular hydrogen and carbodioxide from formate are released. It depends on [4Fe-4S] cluster as a cofactor. The cofactor is Ni(2+).

In Escherichia coli (strain K12), this protein is Formate hydrogenlyase subunit 5 (hycE).